We begin with the raw amino-acid sequence, 154 residues long: Ribosomal RNA large subunit methyltransferase H (154 aa).

Leu-71 and Gly-103 together coordinate S-adenosyl-L-methionine.

Belongs to the RNA methyltransferase RlmH family. As to quaternary structure, homodimer.

The protein localises to the cytoplasm. The catalysed reaction is pseudouridine(1915) in 23S rRNA + S-adenosyl-L-methionine = N(3)-methylpseudouridine(1915) in 23S rRNA + S-adenosyl-L-homocysteine + H(+). In terms of biological role, specifically methylates the pseudouridine at position 1915 (m3Psi1915) in 23S rRNA. The polypeptide is Ribosomal RNA large subunit methyltransferase H (Solidesulfovibrio magneticus (strain ATCC 700980 / DSM 13731 / RS-1) (Desulfovibrio magneticus)).